A 356-amino-acid chain; its full sequence is S-adenosylmethionine:tRNA ribosyltransferase-isomerase (356 aa).

Belongs to the QueA family. As to quaternary structure, monomer.

It localises to the cytoplasm. It carries out the reaction 7-aminomethyl-7-carbaguanosine(34) in tRNA + S-adenosyl-L-methionine = epoxyqueuosine(34) in tRNA + adenine + L-methionine + 2 H(+). The protein operates within tRNA modification; tRNA-queuosine biosynthesis. Its function is as follows. Transfers and isomerizes the ribose moiety from AdoMet to the 7-aminomethyl group of 7-deazaguanine (preQ1-tRNA) to give epoxyqueuosine (oQ-tRNA). The polypeptide is S-adenosylmethionine:tRNA ribosyltransferase-isomerase (Xanthomonas oryzae pv. oryzae (strain KACC10331 / KXO85)).